The sequence spans 445 residues: Phosphoglucosamine mutase (445 aa).

Residue Ser-102 is the Phosphoserine intermediate of the active site. Mg(2+)-binding residues include Ser-102, Asp-241, Asp-243, and Asp-245. Residue Ser-102 is modified to Phosphoserine.

Belongs to the phosphohexose mutase family. It depends on Mg(2+) as a cofactor. Post-translationally, activated by phosphorylation.

The catalysed reaction is alpha-D-glucosamine 1-phosphate = D-glucosamine 6-phosphate. Its function is as follows. Catalyzes the conversion of glucosamine-6-phosphate to glucosamine-1-phosphate. The polypeptide is Phosphoglucosamine mutase (Pectobacterium carotovorum subsp. carotovorum (strain PC1)).